Here is a 288-residue protein sequence, read N- to C-terminus: Phenazine biosynthesis-like domain-containing protein (288 aa).

Residue Glu46 is part of the active site.

The protein belongs to the PhzF family. As to quaternary structure, interacts with UNRIP/MAWD.

This chain is Phenazine biosynthesis-like domain-containing protein (PBLD), found in Bos taurus (Bovine).